The sequence spans 1317 residues: Clustered mitochondria protein homolog (1317 aa).

The region spanning 382 to 626 (DITRSQESYL…RVTPLDVTWQ (245 aa)) is the Clu domain. The span at 669–689 (KAQEEAANKEQSSEVTESKEQ) shows a compositional bias: basic and acidic residues. Disordered stretches follow at residues 669 to 700 (KAQEEAANKEQSSEVTESKEQESEEKAEEALD) and 939 to 966 (ANGVNGASHDEGKKKKKKGGDSKSPSRA). TPR repeat units follow at residues 1040-1073 (AKLYHQLSMLYYQTDEKEAAVELARKAVIVTERT), 1082-1115 (ILAYLNLSLFEHASGNTKAALVYIKHAMDLWKII), and 1124-1157 (ITTMNNAAVMLQHLKQYSDSRKWFEASLAVCESL). Disordered stretches follow at residues 1252 to 1273 (VQPQVGQTAPEASGAKGAANAS) and 1288 to 1317 (GGDATSSRSKQKKRAAASNPKLRGSKKSSA).

This sequence belongs to the CLU family. May associate with the eukaryotic translation initiation factor 3 (eIF-3) complex.

It is found in the cytoplasm. MRNA-binding protein involved in proper cytoplasmic distribution of mitochondria. This is Clustered mitochondria protein homolog from Neosartorya fischeri (strain ATCC 1020 / DSM 3700 / CBS 544.65 / FGSC A1164 / JCM 1740 / NRRL 181 / WB 181) (Aspergillus fischerianus).